We begin with the raw amino-acid sequence, 572 residues long: MVRATVLNVGDHASEGVRTNKAKGEKMVLEPPMNSAQRRKLGDITNLQNQKNLMNQGAKHQQQAILISSKENAENLQKENTKLMKVVMERDGIKSDLKKLRIEFQKVQEQNLLLAQANTRILAEFNTSKDQLKVLQHELGCKNGLVMARKMLLKEQTLPCTRHASKVKAQANACGGACKTFQPNDADHEHASGSSNANSLQRNEKANSKRRVSGRKNPANSEVLDIIGRSGETCQMEDNIDNKKLVSDSDNDAENHINDNVQSKRYCAGRQSSSSKTREASQTETLQKVVDAKEIKGDARFSLTKHSDWLKSQEPEPSESLYESRFPLRRRSARLKSQEPEPSESFHDSIETTKRRRSAIRSAMFNIQELGVIQNLNGLPDDQEIAAKARCSAREQSTGSKPEAVEPHDTKEIIGKSRISLRRQSARFNFQELGVTENLNGPHDDQTIAANARCCASEQSIGSKPEAVEPHDIEERIGKIRVSSRRQSANIETPRAIKEPANPPLHDDNVEESSQISCSVSMELKRESKKKPTGDESEEMRKTTVGRPSRQAAEKIKSYKEPSLKEKMRGGF.

A coiled-coil region spans residues Lys-59–Gln-110. Disordered stretches follow at residues Asp-185–Ser-221, Lys-244–Thr-285, Ala-333–Thr-352, and Ser-484–Phe-572. Positions Ser-192 to Gln-201 are enriched in polar residues. Composition is skewed to basic and acidic residues over residues Lys-244–Ile-257, Lys-336–Thr-352, Glu-523–Lys-542, and Ala-552–Phe-572.

This sequence belongs to the shugoshin family.

In terms of biological role, protects sister chromatid centromere cohesion in meiosis I but not through the protection of the cohesin SYN1. Required with SGO2 for full protection of centromeric cohesion during anaphase I. Required to prevent precocious release of pericentromeric cohesins during meiosis. Not necessary for the maintenance of the synaptonemal complex (SC). Not required for monopolar spindle orientation in meiosis I. This Arabidopsis thaliana (Mouse-ear cress) protein is SHUGOSHIN 1.